A 402-amino-acid polypeptide reads, in one-letter code: 4-hydroxy-3-methylbut-2-en-1-yl diphosphate synthase (ferredoxin) (402 aa).

The [4Fe-4S] cluster site is built by C311, C314, C345, and E352.

This sequence belongs to the IspG family. [4Fe-4S] cluster serves as cofactor.

It catalyses the reaction (2E)-4-hydroxy-3-methylbut-2-enyl diphosphate + 2 oxidized [2Fe-2S]-[ferredoxin] + H2O = 2-C-methyl-D-erythritol 2,4-cyclic diphosphate + 2 reduced [2Fe-2S]-[ferredoxin] + H(+). Its pathway is isoprenoid biosynthesis; isopentenyl diphosphate biosynthesis via DXP pathway; isopentenyl diphosphate from 1-deoxy-D-xylulose 5-phosphate: step 5/6. Functionally, converts 2C-methyl-D-erythritol 2,4-cyclodiphosphate (ME-2,4cPP) into 1-hydroxy-2-methyl-2-(E)-butenyl 4-diphosphate, using ferredoxin I (PetF) as the reducing agent. The protein is 4-hydroxy-3-methylbut-2-en-1-yl diphosphate synthase (ferredoxin) of Thermosynechococcus vestitus (strain NIES-2133 / IAM M-273 / BP-1).